A 731-amino-acid chain; its full sequence is Alpha-xylosidase (731 aa).

Active-site residues include D353 and E356. The active-site Proton donor is D428.

This sequence belongs to the glycosyl hydrolase 31 family. Monomer.

It carries out the reaction Hydrolysis of terminal, non-reducing alpha-D-xylose residues with release of alpha-D-xylose.. Catalyzes the liberation of alpha-xylose from the non-reducing terminal glucose of xyloglucan oligosaccharides. Has high hydrolytic activity on the disaccharide isoprimeverose. Follows a retaining mechanism of substrate hydrolysis. This is Alpha-xylosidase (xylS) from Saccharolobus solfataricus (strain ATCC 35092 / DSM 1617 / JCM 11322 / P2) (Sulfolobus solfataricus).